Consider the following 617-residue polypeptide: Protein fem-1 homolog C (617 aa).

Met1 is subject to N-acetylmethionine. 7 ANK repeats span residues Asp2–Val31, Asn40–Val70, Glu82–Asn111, Thr115–Val144, His148–Arg177, Lys181–Lys210, and Tyr213–Thr242. 2 TPR repeats span residues Ile245–Asp279 and Ser338–Asn371. ANK repeat units lie at residues Asn481–Val523 and Asp527–Ala556.

This sequence belongs to the fem-1 family. As to quaternary structure, component of a Cul2-RING (CRL2) E3 ubiquitin-protein ligase complex, also named ECS (Elongin BC-CUL2/5-SOCS-box protein) complex, composed of CUL2, Elongin BC (ELOB and ELOC), RBX1 and substrate-specific adapter FEM1C. In terms of tissue distribution, widely expressed. Highly expressed in kidney, cardiac tissue, skeletal muscle and testis. Expressed at lower levels in other tissues, including cartilage.

It participates in protein modification; protein ubiquitination. Substrate-recognition component of a Cul2-RING (CRL2) E3 ubiquitin-protein ligase complex of the DesCEND (destruction via C-end degrons) pathway, which recognizes a C-degron located at the extreme C terminus of target proteins, leading to their ubiquitination and degradation. The C-degron recognized by the DesCEND pathway is usually a motif of less than ten residues and can be present in full-length proteins, truncated proteins or proteolytically cleaved forms. The CRL2(FEM1C) complex specifically recognizes proteins with an arginine at the C-terminus: recognizes and binds proteins ending with -Lys/Arg-Xaa-Arg and -Lys/Arg-Xaa-Xaa-Arg C-degrons, such as SIL1 or OR51B2, leading to their ubiquitination and degradation. The CRL2(FEM1C) complex mediates ubiquitination and degradation of truncated MSRB1/SEPX1 selenoproteins produced by failed UGA/Sec decoding. Promotes ubiquitination and degradation of SLBP. The protein is Protein fem-1 homolog C of Homo sapiens (Human).